The chain runs to 205 residues: Pyridoxal 5'-phosphate synthase subunit PdxT (205 aa).

53–55 (GES) is a binding site for L-glutamine. C85 functions as the Nucleophile in the catalytic mechanism. Residues R112 and 140–141 (IR) contribute to the L-glutamine site. Residues H176 and E178 each act as charge relay system in the active site.

It belongs to the glutaminase PdxT/SNO family. As to quaternary structure, in the presence of PdxS, forms a dodecamer of heterodimers. Only shows activity in the heterodimer.

The catalysed reaction is aldehydo-D-ribose 5-phosphate + D-glyceraldehyde 3-phosphate + L-glutamine = pyridoxal 5'-phosphate + L-glutamate + phosphate + 3 H2O + H(+). It carries out the reaction L-glutamine + H2O = L-glutamate + NH4(+). Its pathway is cofactor biosynthesis; pyridoxal 5'-phosphate biosynthesis. Catalyzes the hydrolysis of glutamine to glutamate and ammonia as part of the biosynthesis of pyridoxal 5'-phosphate. The resulting ammonia molecule is channeled to the active site of PdxS. The polypeptide is Pyridoxal 5'-phosphate synthase subunit PdxT (Haloquadratum walsbyi (strain DSM 16790 / HBSQ001)).